A 301-amino-acid chain; its full sequence is Acetylglutamate kinase (301 aa).

Residues 70–71 (GG), R92, and N185 each bind substrate.

It belongs to the acetylglutamate kinase family. ArgB subfamily.

Its subcellular location is the cytoplasm. The catalysed reaction is N-acetyl-L-glutamate + ATP = N-acetyl-L-glutamyl 5-phosphate + ADP. Its pathway is amino-acid biosynthesis; L-arginine biosynthesis; N(2)-acetyl-L-ornithine from L-glutamate: step 2/4. Catalyzes the ATP-dependent phosphorylation of N-acetyl-L-glutamate. The polypeptide is Acetylglutamate kinase (Synechococcus elongatus (strain ATCC 33912 / PCC 7942 / FACHB-805) (Anacystis nidulans R2)).